The following is a 228-amino-acid chain: MIQRHKLIVLIFLLIFCLSGCNTSKRLPYSHKYSYKELSKDDPHNLTYKGHYKVGKNYKIKGKTYKPHSTKSFTETGYASWYGGRKDGFHGKKTANGDRFNRNLLTAAHKTLPLPCLVKVTNKANNKSVILMVNDRGPFKKNRIIDVSQKAAEILAFKNQGITKVKIEYLPNETEKFLKNINLKKPQSKTLAKNSKKSSSTKVTKNAKCSVNCHIKLVNLKYKLAVNP.

The N-terminal stretch at Met1–Thr23 is a signal peptide.

Belongs to the RlpA family.

Lytic transglycosylase with a strong preference for naked glycan strands that lack stem peptides. This Rickettsia felis (strain ATCC VR-1525 / URRWXCal2) (Rickettsia azadi) protein is Endolytic peptidoglycan transglycosylase RlpA.